A 467-amino-acid polypeptide reads, in one-letter code: Acetyl-CoA decarbonylase/synthase complex subunit beta (467 aa).

Residues C193, C196, C282, and C284 each coordinate [Ni-Fe-S] cluster. Positions 403 to 428 (RWAEEEEEEEEKAPEEEAPAEEPTME) are disordered. The segment covering 405–426 (AEEEEEEEEKAPEEEAPAEEPT) has biased composition (acidic residues).

This sequence belongs to the CdhC family. In terms of assembly, monomer. The ACDS complex is made up of alpha, epsilon, beta, gamma and delta chains with a probable stoichiometry of (alpha(2)epsilon(2))(4)-beta(8)-(gamma(1)delta(1))(8). The cofactor is [Ni-Fe-S] cluster.

The catalysed reaction is Co(I)-[corrinoid Fe-S protein] + acetyl-CoA + H(+) = methyl-Co(III)-[corrinoid Fe-S protein] + CO + CoA. Functionally, part of a complex that catalyzes the reversible cleavage of acetyl-CoA, allowing autotrophic growth from CO(2). The alpha-epsilon complex generates CO from CO(2), while the beta subunit (this protein) combines the CO with CoA and a methyl group to form acetyl-CoA. The methyl group, which is incorporated into acetyl-CoA, is transferred to the beta subunit by a corrinoid iron-sulfur protein (the gamma-delta complex). The polypeptide is Acetyl-CoA decarbonylase/synthase complex subunit beta (Methanopyrus kandleri (strain AV19 / DSM 6324 / JCM 9639 / NBRC 100938)).